A 639-amino-acid polypeptide reads, in one-letter code: Probable potassium transport system protein Kup 1 (639 aa).

The next 12 membrane-spanning stretches (helical) occupy residues 27–47, 64–84, 115–135, 151–171, 182–202, 225–245, 261–281, 293–313, 351–371, 377–397, 408–428, and 430–450; these read AILG…LYAF, VIGL…FKYI, VLIV…MITP, PAMD…LFAI, FFGP…LIHI, GFYG…AEAL, WFCL…ALVL, LMFP…ATII, IYLP…VLTF, LATA…LMFF, IWLA…FLGA, and LLKI…FTVI.

It belongs to the HAK/KUP transporter (TC 2.A.72) family.

Its subcellular location is the cell inner membrane. The catalysed reaction is K(+)(in) + H(+)(in) = K(+)(out) + H(+)(out). In terms of biological role, transport of potassium into the cell. Likely operates as a K(+):H(+) symporter. The sequence is that of Probable potassium transport system protein Kup 1 from Agrobacterium fabrum (strain C58 / ATCC 33970) (Agrobacterium tumefaciens (strain C58)).